The following is a 100-amino-acid chain: UPF0473 protein Csac_1599 (100 aa).

It belongs to the UPF0473 family.

This chain is UPF0473 protein Csac_1599, found in Caldicellulosiruptor saccharolyticus (strain ATCC 43494 / DSM 8903 / Tp8T 6331).